The primary structure comprises 257 residues: PHD finger protein Alfin1 (257 aa).

The interval 145-200 (SKDQLTAHNNGSNSKYKSSGKSRQSESQTKGVKMSAPVKEEVDSGEEEEEDDDEQG) is disordered. Positions 153–166 (NNGSNSKYKSSGKS) are enriched in low complexity. Residues 187 to 199 (DSGEEEEEDDDEQ) show a composition bias toward acidic residues. Residues 200-252 (GATCGACGDNYGTDEFWICCDMCEKWFHGKCVKITPAKAEHIKQYKCPGCSIK) form a PHD-type zinc finger.

The protein belongs to the Alfin family. Interacts with H3K4me3 and to a lesser extent with H3K4me2. As to expression, predominantly expressed in the roots.

The protein resides in the nucleus. In terms of biological role, histone-binding component that specifically recognizes H3 tails trimethylated on 'Lys-4' (H3K4me3), which mark transcription start sites of virtually all active genes. Transcriptional regulator that binds specifically to DNA sequences 5'-GNGGTG-3' or 5'-GTGGNG-3', including promoter elements of the salt-inducible PRP2 gene. Plays a role in salinity tolerance. This chain is PHD finger protein Alfin1 (ALFIN-1), found in Medicago sativa (Alfalfa).